Here is a 299-residue protein sequence, read N- to C-terminus: Bifunctional protein FolD (299 aa).

Residues 166–168 (GRS), serine 191, and isoleucine 232 each bind NADP(+).

It belongs to the tetrahydrofolate dehydrogenase/cyclohydrolase family. In terms of assembly, homodimer.

The enzyme catalyses (6R)-5,10-methylene-5,6,7,8-tetrahydrofolate + NADP(+) = (6R)-5,10-methenyltetrahydrofolate + NADPH. The catalysed reaction is (6R)-5,10-methenyltetrahydrofolate + H2O = (6R)-10-formyltetrahydrofolate + H(+). Its pathway is one-carbon metabolism; tetrahydrofolate interconversion. In terms of biological role, catalyzes the oxidation of 5,10-methylenetetrahydrofolate to 5,10-methenyltetrahydrofolate and then the hydrolysis of 5,10-methenyltetrahydrofolate to 10-formyltetrahydrofolate. This Anaplasma marginale (strain St. Maries) protein is Bifunctional protein FolD.